The following is a 79-amino-acid chain: Calcium/calmodulin-dependent protein kinase II inhibitor 2 (79 aa).

The segment at 43 to 69 (KRPPKLGQIGRAKRVVIEDDRIDEVLK) is inhibitory domain.

It belongs to the CAMK2N family.

The protein resides in the nucleus. Its subcellular location is the cytoplasm. It localises to the cytosol. Functionally, potent and specific cellular inhibitor of CaM-kinase II (CAMK2). Traps Ca(2+)/calmodulin on CAMK2. The polypeptide is Calcium/calmodulin-dependent protein kinase II inhibitor 2 (camk2n2) (Xenopus laevis (African clawed frog)).